The primary structure comprises 133 residues: Small ribosomal subunit protein uS11 (133 aa).

It belongs to the universal ribosomal protein uS11 family. Part of the 30S ribosomal subunit. Interacts with proteins S7 and S18. Binds to IF-3.

Its function is as follows. Located on the platform of the 30S subunit, it bridges several disparate RNA helices of the 16S rRNA. Forms part of the Shine-Dalgarno cleft in the 70S ribosome. The sequence is that of Small ribosomal subunit protein uS11 from Shouchella clausii (strain KSM-K16) (Alkalihalobacillus clausii).